The chain runs to 722 residues: Biotin--protein ligase (722 aa).

The disordered stretch occupies residues K27–L93. The segment covering A46–G55 has biased composition (low complexity). Phosphoserine is present on S295. Positions T459–Q648 constitute a BPL/LPL catalytic domain.

This sequence belongs to the biotin--protein ligase family. In terms of assembly, monomer.

It is found in the cytoplasm. The protein localises to the mitochondrion. It catalyses the reaction apo-[methylmalonyl-CoA:pyruvate carboxytransferase] + biotin + ATP = holo-[methylmalonyl-CoA:pyruvate carboxytransferase] + AMP + diphosphate + H(+). The enzyme catalyses apo-[propionyl-CoA:carbon-dioxide ligase (ADP-forming)] + biotin + ATP = holo-[propionyl-CoA:carbon-dioxide ligase (ADP-forming)] + AMP + diphosphate + H(+). It carries out the reaction apo-[3-methylcrotonoyl-CoA:carbon-dioxide ligase (ADP-forming)] + biotin + ATP = holo-[3-methylcrotonoyl-CoA:carbon-dioxide ligase (ADP-forming)] + AMP + diphosphate + H(+). The catalysed reaction is biotin + L-lysyl-[protein] + ATP = N(6)-biotinyl-L-lysyl-[protein] + AMP + diphosphate + H(+). Functionally, biotin--protein ligase catalyzing the biotinylation of the 4 biotin-dependent carboxylases acetyl-CoA-carboxylase, pyruvate carboxylase, propionyl-CoA carboxylase, and methylcrotonyl-CoA carboxylase. The protein is Biotin--protein ligase of Mus musculus (Mouse).